The sequence spans 233 residues: Probable F-box protein At3g56670 (233 aa).

Residues 22-69 enclose the F-box domain; the sequence is HGGVIDIPLNTDSGVTKNTPGEIALLRFKSVSKLWSSIISSRRDFIES.

The polypeptide is Probable F-box protein At3g56670 (Arabidopsis thaliana (Mouse-ear cress)).